The chain runs to 201 residues: UPF0323 lipoprotein Cj0371 (201 aa).

The signal sequence occupies residues 1 to 26 (MKKIKKIIQIGMIGGLAAVAGGALAG). Residue Cys-27 is the site of N-palmitoyl cysteine attachment. A lipid anchor (S-diacylglycerol cysteine) is attached at Cys-27. The disordered stretch occupies residues 169-201 (NKAGTTSSASSAKKSGFFGGGSKATSSSSSFGS). Composition is skewed to low complexity over residues 170-184 (KAGT…KKSG) and 191-201 (KATSSSSSFGS).

Belongs to the UPF0323 family.

It localises to the cell membrane. This chain is UPF0323 lipoprotein Cj0371, found in Campylobacter jejuni subsp. jejuni serotype O:2 (strain ATCC 700819 / NCTC 11168).